The chain runs to 805 residues: Cell division cycle 5-related protein (805 aa).

HTH myb-type domains follow at residues 1–58 (MPRI…DPSI) and 59–108 (KKTE…DQAQ). DNA-binding regions (H-T-H motif) lie at residues 31–54 (WSRIASLLHRKSAKQCKARWYEWL) and 82–104 (WRTIAPLIGRTAAQCLERYEYLL). The segment covering 108 to 127 (QAKEGDKDEGDDPRKLRPGE) has biased composition (basic and acidic residues). Disordered stretches follow at residues 108-143 (QAKEGDKDEGDDPRKLRPGEIDPNPETKPARPDPID), 246-293 (HLEG…HVKK), 409-442 (LSTPYRTPGEGSGSTPRQGMTPRGAIGTPSQRSV), and 530-556 (LERRRRSQAVQRELPRPSNVNTSVLRP). The stretch at 142-193 (IDMDEDELEMLSEARARLANTQGKKAKRKAREKQLEEARRLAALQKRRELRA) forms a coiled coil. Positions 246 to 274 (HLEGKMRDEIEQQERKKDKERMKKKKESD) are enriched in basic and acidic residues. 2 coiled-coil regions span residues 511–542 (EDAADIDERALALRAKQEELERRRRSQAVQRE) and 678–804 (YTRA…SKLQ).

It belongs to the CEF1 family. As to quaternary structure, component of the precatalytic, catalytic and postcatalytic spliceosome complexes.

The protein resides in the nucleus. It localises to the cytoplasm. DNA-binding protein involved in cell cycle control. May act as a transcription activator. Plays a role in pre-mRNA splicing as core component of precatalytic, catalytic and postcatalytic spliceosomal complexes. May also play a role in the response to DNA damage (DDR). The sequence is that of Cell division cycle 5-related protein (cdc5l) from Nematostella vectensis (Starlet sea anemone).